Consider the following 195-residue polypeptide: MRVAEVVRNTSETQIRVKLDLDGTGQQKLATGVPFLDHMLDQIARHGLVDLEVEAHGDTHIDDHHTVEDVGITLGQAVAKAIGDRKGIRRYGHSYVPLDEALSRVVIDFSGRPGLEFHVPFTRARIGTFDVDLSIEFFRGFVNHAGVTLHIDNLRGINAHHQLETVFKAFGRALRAAVELDERAAGQIPSTKGSL.

It belongs to the imidazoleglycerol-phosphate dehydratase family.

It localises to the cytoplasm. The catalysed reaction is D-erythro-1-(imidazol-4-yl)glycerol 3-phosphate = 3-(imidazol-4-yl)-2-oxopropyl phosphate + H2O. It participates in amino-acid biosynthesis; L-histidine biosynthesis; L-histidine from 5-phospho-alpha-D-ribose 1-diphosphate: step 6/9. In Burkholderia cenocepacia (strain ATCC BAA-245 / DSM 16553 / LMG 16656 / NCTC 13227 / J2315 / CF5610) (Burkholderia cepacia (strain J2315)), this protein is Imidazoleglycerol-phosphate dehydratase.